Reading from the N-terminus, the 227-residue chain is Phosphoribosylformylglycinamidine synthase subunit PurQ (227 aa).

The Glutamine amidotransferase type-1 domain occupies 3 to 225; the sequence is FAVIVFPGSN…LKQWRETYVV (223 aa). Cys86 acts as the Nucleophile in catalysis. Catalysis depends on residues His194 and Glu196.

In terms of assembly, part of the FGAM synthase complex composed of 1 PurL, 1 PurQ and 2 PurS subunits.

It localises to the cytoplasm. It carries out the reaction N(2)-formyl-N(1)-(5-phospho-beta-D-ribosyl)glycinamide + L-glutamine + ATP + H2O = 2-formamido-N(1)-(5-O-phospho-beta-D-ribosyl)acetamidine + L-glutamate + ADP + phosphate + H(+). It catalyses the reaction L-glutamine + H2O = L-glutamate + NH4(+). Its pathway is purine metabolism; IMP biosynthesis via de novo pathway; 5-amino-1-(5-phospho-D-ribosyl)imidazole from N(2)-formyl-N(1)-(5-phospho-D-ribosyl)glycinamide: step 1/2. Its function is as follows. Part of the phosphoribosylformylglycinamidine synthase complex involved in the purines biosynthetic pathway. Catalyzes the ATP-dependent conversion of formylglycinamide ribonucleotide (FGAR) and glutamine to yield formylglycinamidine ribonucleotide (FGAM) and glutamate. The FGAM synthase complex is composed of three subunits. PurQ produces an ammonia molecule by converting glutamine to glutamate. PurL transfers the ammonia molecule to FGAR to form FGAM in an ATP-dependent manner. PurS interacts with PurQ and PurL and is thought to assist in the transfer of the ammonia molecule from PurQ to PurL. This chain is Phosphoribosylformylglycinamidine synthase subunit PurQ, found in Bacillus thuringiensis (strain Al Hakam).